Here is a 415-residue protein sequence, read N- to C-terminus: WD repeat-containing protein JIP5 (415 aa).

WD repeat units follow at residues 5–44, 104–142, 145–184, 189–228, and 233–282; these read DVGS…KEQA, AHDS…CVRE, QHFD…PEPF, DQDD…GDCV, and GHPL…VVAD. The disordered stretch occupies residues 328-415; it reads GALGVTNENE…DVENAFFDEL (88 aa). A compositionally biased stretch (acidic residues) spans 337 to 346; it reads EQSDEDEEMD. The span at 358–367 shows a compositional bias: low complexity; that stretch reads DGSGSSSSGE. A compositionally biased stretch (basic and acidic residues) spans 390 to 405; the sequence is EQKPLDVDKPKGRNEI.

Belongs to the WD repeat WDR55 family.

Its subcellular location is the nucleus. It localises to the nucleolus. The chain is WD repeat-containing protein JIP5 (JIP5) from Laccaria bicolor (strain S238N-H82 / ATCC MYA-4686) (Bicoloured deceiver).